The primary structure comprises 444 residues: MSTGTSASYKRDNAFYALDKVERILLDGYSLCDACTGRLFGLRGYGLSNTERGRALKTLLIMKAFQASPRQADLELLRVLARTGFEPARELLKKLSGEDVEVKACSICEGLTGRYYELALRAVEEAKSYEFNTFEVGVRIDAEVIRREEELWRRYGLESAESIRNEASREVGKIISKLTGKEYSRNNSELLIIVDLSAGAIELHPAPVFVYGRYRKYARGLPQNPWPQPDERIKFNTSIEELIVKPALELFEAEKAKFHAAGREDIDVRTLGTGRPFVLEIKKPRKRNIDLKVLAEKINSGAGGLIEVLDLAYTDRKTIKKLKSLASIAKKAYVARVKFEKPVDDEKLAEISKVFSNAVINQRTPTRVLHRRVDKLRKKIVYRLEARKISQDEVEFYLETQGGFYVKEFIHGDNGRTTPSIAEFLGNNVLSIELDVVSIEETAA.

The active-site Nucleophile is the Asp265. The substrate site is built by Tyr333 and Tyr405.

It belongs to the pseudouridine synthase Pus10 family.

It carries out the reaction uridine(54) in tRNA = pseudouridine(54) in tRNA. The enzyme catalyses uridine(55) in tRNA = pseudouridine(55) in tRNA. Functionally, responsible for synthesis of pseudouridine from uracil-54 and uracil-55 in the psi GC loop of transfer RNAs. The sequence is that of tRNA pseudouridine synthase Pus10 from Thermofilum pendens (strain DSM 2475 / Hrk 5).